We begin with the raw amino-acid sequence, 229 residues long: NAD(P)H-hydrate epimerase (229 aa).

The region spanning 10-217 is the YjeF N-terminal domain; the sequence is AINVDLELFN…ALQRKYELNL (208 aa). Position 60-64 (60-64) interacts with (6S)-NADPHX; sequence NNGGD. Positions 61 and 125 each coordinate K(+). Residues 129–135 and D158 each bind (6S)-NADPHX; that span reads GFSFKPP. S161 provides a ligand contact to K(+).

Belongs to the NnrE/AIBP family. K(+) is required as a cofactor.

The enzyme catalyses (6R)-NADHX = (6S)-NADHX. It catalyses the reaction (6R)-NADPHX = (6S)-NADPHX. Its function is as follows. Catalyzes the epimerization of the S- and R-forms of NAD(P)HX, a damaged form of NAD(P)H that is a result of enzymatic or heat-dependent hydration. This is a prerequisite for the S-specific NAD(P)H-hydrate dehydratase to allow the repair of both epimers of NAD(P)HX. This Drosophila mojavensis (Fruit fly) protein is NAD(P)H-hydrate epimerase.